Reading from the N-terminus, the 336-residue chain is Anthranilate phosphoribosyltransferase (336 aa).

5-phospho-alpha-D-ribose 1-diphosphate is bound by residues glycine 82, 85 to 86 (GD), threonine 90, 92 to 95 (NIST), 110 to 118 (KHGNRFASG), and serine 122. Glycine 82 lines the anthranilate pocket. Mg(2+) is bound at residue serine 94. Asparagine 113 lines the anthranilate pocket. Residue arginine 168 coordinates anthranilate. Residues aspartate 227 and glutamate 228 each contribute to the Mg(2+) site.

This sequence belongs to the anthranilate phosphoribosyltransferase family. Homodimer. Requires Mg(2+) as cofactor.

It catalyses the reaction N-(5-phospho-beta-D-ribosyl)anthranilate + diphosphate = 5-phospho-alpha-D-ribose 1-diphosphate + anthranilate. It functions in the pathway amino-acid biosynthesis; L-tryptophan biosynthesis; L-tryptophan from chorismate: step 2/5. In terms of biological role, catalyzes the transfer of the phosphoribosyl group of 5-phosphorylribose-1-pyrophosphate (PRPP) to anthranilate to yield N-(5'-phosphoribosyl)-anthranilate (PRA). In Desulfitobacterium hafniense (strain Y51), this protein is Anthranilate phosphoribosyltransferase.